A 371-amino-acid polypeptide reads, in one-letter code: Deoxyuridine 5'-triphosphate nucleotidohydrolase (371 aa).

Residues 260-262 (RSS) and 366-367 (FG) each bind substrate. The tract at residues 350–371 (NEFDAEAPPSERGTGGFGSTGI) is disordered. Over residues 362-371 (GTGGFGSTGI) the composition is skewed to gly residues.

The protein belongs to the dUTPase family. Mg(2+) is required as a cofactor.

The catalysed reaction is dUTP + H2O = dUMP + diphosphate + H(+). Functionally, involved in nucleotide metabolism: produces dUMP, the immediate precursor of thymidine nucleotides and decreases the intracellular concentration of dUTP to avoid uracil incorporation into viral DNA. This is Deoxyuridine 5'-triphosphate nucleotidohydrolase from Homo sapiens (Human).